The chain runs to 437 residues: Phosphoribosylamine--glycine ligase (437 aa).

Residues 109-316 (KDFLARHGIP…LLDLIEAALN (208 aa)) form the ATP-grasp domain. 135 to 196 (VRQQGAPIVI…EEYLDGEEAS (62 aa)) provides a ligand contact to ATP. Mg(2+)-binding residues include glutamate 286 and asparagine 288.

This sequence belongs to the GARS family. Requires Mg(2+) as cofactor. Mn(2+) serves as cofactor.

The enzyme catalyses 5-phospho-beta-D-ribosylamine + glycine + ATP = N(1)-(5-phospho-beta-D-ribosyl)glycinamide + ADP + phosphate + H(+). It functions in the pathway purine metabolism; IMP biosynthesis via de novo pathway; N(1)-(5-phospho-D-ribosyl)glycinamide from 5-phospho-alpha-D-ribose 1-diphosphate: step 2/2. The chain is Phosphoribosylamine--glycine ligase from Xylella fastidiosa (strain 9a5c).